A 431-amino-acid polypeptide reads, in one-letter code: Adenylosuccinate synthetase (431 aa).

GTP is bound by residues Gly-13 to Lys-19 and Gly-41 to Thr-43. Residue Asp-14 is the Proton acceptor of the active site. Asp-14 and Gly-41 together coordinate Mg(2+). Residues Asp-14 to Lys-17, Asn-39 to His-42, Thr-130, Arg-144, Gln-225, Thr-240, and Arg-304 contribute to the IMP site. His-42 serves as the catalytic Proton donor. Ala-300–Arg-306 serves as a coordination point for substrate. GTP contacts are provided by residues Arg-306, Lys-332–Asp-334, and Ser-414–Gly-416.

It belongs to the adenylosuccinate synthetase family. In terms of assembly, homodimer. Mg(2+) is required as a cofactor.

It localises to the cytoplasm. The enzyme catalyses IMP + L-aspartate + GTP = N(6)-(1,2-dicarboxyethyl)-AMP + GDP + phosphate + 2 H(+). The protein operates within purine metabolism; AMP biosynthesis via de novo pathway; AMP from IMP: step 1/2. Plays an important role in the de novo pathway of purine nucleotide biosynthesis. Catalyzes the first committed step in the biosynthesis of AMP from IMP. The protein is Adenylosuccinate synthetase of Nitrosococcus oceani (strain ATCC 19707 / BCRC 17464 / JCM 30415 / NCIMB 11848 / C-107).